A 788-amino-acid polypeptide reads, in one-letter code: Cadherin-10 (788 aa).

An N-terminal signal peptide occupies residues 1–22 (MTIYQFLRLFVLWACLPHFCCP). A propeptide spanning residues 23–54 (ELTFRRTPGIQQMTAESRAPRSDGKILHRQKR) is cleaved from the precursor. Residues 23–613 (ELTFRRTPGI…LLPAGLSTGA (591 aa)) lie on the Extracellular side of the membrane. 5 consecutive Cadherin domains span residues 56 to 160 (WMWN…EPTF), 161 to 269 (PEEI…PPRF), 270 to 384 (PQNT…PPVF), 385 to 489 (SRSS…APQF), and 489 to 603 (FAVF…AEAL). N-linked (GlcNAc...) asparagine glycosylation is present at asparagine 256. N-linked (GlcNAc...) asparagine glycans are attached at residues asparagine 456 and asparagine 534. A helical membrane pass occupies residues 614-634 (LIAILLCIIILLVIVVLFAAL). The Cytoplasmic portion of the chain corresponds to 635-788 (KRQRKKEPLI…YGGGESDKDA (154 aa)). Serine 784 is modified (phosphoserine).

The protein resides in the cell membrane. In terms of biological role, cadherins are calcium-dependent cell adhesion proteins. They preferentially interact with themselves in a homophilic manner in connecting cells; cadherins may thus contribute to the sorting of heterogeneous cell types. This chain is Cadherin-10 (Cdh10), found in Mus musculus (Mouse).